Here is a 709-residue protein sequence, read N- to C-terminus: G1/S-specific cyclin-E (709 aa).

Disordered stretches follow at residues M1–V30, I43–S149, V162–Q205, T221–Q289, and A642–P709. Composition is skewed to polar residues over residues S7–E29, P61–Q70, and C91–G106. Phosphoserine is present on residues S114, S115, S117, and S129. Residues V162–S175 are compositionally biased toward polar residues. Phosphoserine is present on residues S187, S192, S195, and S198. A compositionally biased stretch (pro residues) spans S187–P199. The segment covering E228–E258 has biased composition (acidic residues). Residues Y260–V277 show a composition bias toward polar residues. A Phosphothreonine modification is found at T651. Over residues S677–P709 the composition is skewed to low complexity.

Belongs to the cyclin family. Cyclin E subfamily. Interacts with a member of the CDK2/CDK protein kinases to form a serine/threonine kinase holoenzyme complex. The cyclin subunit imparts substrate specificity to the complex. Interacts (via C-terminus) with Z600 (via C-terminus). As to expression, isoform II is ubiquitous in early embryos and, prior to mitosis 14, is rapidly degraded in all cells except the pole (germ) cells. Expressed during G1 phase in proliferating peripheral nervous system cells. Constitutive expression in embryonic cycles lacking a G1 phase.

It localises to the nucleus. Its function is as follows. Essential for the control of the cell cycle at the G1/S (start) transition. Targeted by archipelago for degradation by the SFC ubiquitin ligase complex. The polypeptide is G1/S-specific cyclin-E (CycE) (Drosophila melanogaster (Fruit fly)).